Reading from the N-terminus, the 200-residue chain is Imidazole glycerol phosphate synthase subunit HisH (200 aa).

In terms of domain architecture, Glutamine amidotransferase type-1 spans 3–200 (DVALIDAGGA…LHNFLEMSFP (198 aa)). Cys-78 serves as the catalytic Nucleophile. Active-site residues include His-179 and Glu-181.

Heterodimer of HisH and HisF.

It localises to the cytoplasm. The enzyme catalyses 5-[(5-phospho-1-deoxy-D-ribulos-1-ylimino)methylamino]-1-(5-phospho-beta-D-ribosyl)imidazole-4-carboxamide + L-glutamine = D-erythro-1-(imidazol-4-yl)glycerol 3-phosphate + 5-amino-1-(5-phospho-beta-D-ribosyl)imidazole-4-carboxamide + L-glutamate + H(+). It catalyses the reaction L-glutamine + H2O = L-glutamate + NH4(+). The protein operates within amino-acid biosynthesis; L-histidine biosynthesis; L-histidine from 5-phospho-alpha-D-ribose 1-diphosphate: step 5/9. IGPS catalyzes the conversion of PRFAR and glutamine to IGP, AICAR and glutamate. The HisH subunit catalyzes the hydrolysis of glutamine to glutamate and ammonia as part of the synthesis of IGP and AICAR. The resulting ammonia molecule is channeled to the active site of HisF. In Xanthomonas oryzae pv. oryzae (strain MAFF 311018), this protein is Imidazole glycerol phosphate synthase subunit HisH.